We begin with the raw amino-acid sequence, 1047 residues long: Protein masquerade (1047 aa).

A signal peptide spans 1–30 (MPRHSSTMSRLVLPLIFSILLVSKPSPSQA). The interval 54-87 (KDCPGVCVHTLATLICYEVLDDVACPSPSMKCCI) is CLIP 1. 3 cysteine pairs are disulfide-bonded: Cys-56–Cys-85, Cys-60–Cys-78, and Cys-69–Cys-86. N-linked (GlcNAc...) asparagine glycosylation is present at Asn-95. 2 stretches are compositionally biased toward low complexity: residues 98 to 139 (AVRA…STTP) and 148 to 175 (KRPA…VATA). Residues 98 to 189 (AVRATTTPKT…KEEATKADDA (92 aa)) form a disordered region. Residues 176–189 (KPKDKEEATKADDA) are compositionally biased toward basic and acidic residues. The CLIP 2 stretch occupies residues 192–224 (DCTGVCVADRIAEYCEAYLTSDGLCKEGTKCCV). 3 disulfide bridges follow: Cys-193-Cys-222, Cys-197-Cys-216, and Cys-206-Cys-223. Residue Asn-251 is glycosylated (N-linked (GlcNAc...) asparagine). The interval 252-335 (QTLSEKSAPA…PLSNKLKSGQ (84 aa)) is disordered. Low complexity predominate over residues 263 to 280 (SSSTSTTSTTTTTSTTTT). A glycan (N-linked (GlcNAc...) asparagine) is linked at Asn-287. Residues 307–325 (AAEEEEEQETEEDGEEEEP) show a composition bias toward acidic residues. The tract at residues 343-374 (ECEGECMNGIFAIFCDDIDSDAFCPGEESCCV) is CLIP 3. 3 disulfides stabilise this stretch: Cys-344/Cys-372, Cys-348/Cys-366, and Cys-357/Cys-373. Residues 376–428 (GGASEATPSSKAPPTKPAIKHAPKPAAKPARPASPPPAPPSSTSGGGGGGDFL) form a disordered region. The segment at 457-492 (RCPGFCLLNIMAAFCERPSVLVSTPTTCAKGSVCCD) is CLIP 4. 3 disulfide bridges follow: Cys-458/Cys-490, Cys-462/Cys-484, and Cys-471/Cys-491. The disordered stretch occupies residues 498–527 (APKPKLPPPTPSPTASPTAPPYVLPNTPSP). The span at 501–527 (PKLPPPTPSPTASPTAPPYVLPNTPSP) shows a compositional bias: pro residues. The segment at 532 to 567 (ECPGSCIVSLLSFTCFKNAEMTDLFRCKRSGQICCA) is CLIP 5. 3 cysteine pairs are disulfide-bonded: Cys-533-Cys-565, Cys-537-Cys-558, and Cys-546-Cys-566. N-linked (GlcNAc...) asparagine glycosylation is present at Asn-582. The segment at 583 to 673 (DTAYYPAPPP…TTTTTTTTPR (91 aa)) is disordered. 3 stretches are compositionally biased toward pro residues: residues 588–606 (PAPP…PQTP), 613–638 (NPPP…PPAP), and 650–661 (GLPPQPQPPMTT). Positions 662–672 (PPTTTTTTTTP) are enriched in low complexity. 5 disulfide bridges follow: Cys-682–Cys-916, Cys-829–Cys-845, Cys-930–Cys-1001, Cys-961–Cys-981, and Cys-991–Cys-1019. N-linked (GlcNAc...) asparagine glycosylation is found at Asn-726 and Asn-794. Residues 803 to 1043 (VVGGEDGENG…FIGWINQIIS (241 aa)) form a peptidase S1 region.

This sequence belongs to the peptidase S1 family. CLIP subfamily. Post-translationally, proteolytically cleaved and thereafter secreted.

Its subcellular location is the secreted. It is found in the cell projection. The protein resides in the axon. In terms of biological role, in embryogenesis, has a role in somatic muscle attachment and in the development of axonal pathways probably by stabilizing cell-matrix adhesion and/or by acting as a competitive antagonist of serine proteases. The protein is Protein masquerade of Drosophila melanogaster (Fruit fly).